A 66-amino-acid polypeptide reads, in one-letter code: Beta-mammal toxin Css2 (66 aa).

The region spanning 1–66 (KEGYLVSKST…VWPLPNKTCN (66 aa)) is the LCN-type CS-alpha/beta domain. Intrachain disulfides connect cysteine 12/cysteine 65, cysteine 16/cysteine 41, cysteine 25/cysteine 46, and cysteine 29/cysteine 48. The residue at position 66 (asparagine 66) is an Asparagine amide.

Belongs to the long (4 C-C) scorpion toxin superfamily. Sodium channel inhibitor family. Beta subfamily. C-terminal amidation increases its affinity for sodium channels. Expressed by the venom gland.

It localises to the secreted. Functionally, beta toxin that binds site-4 of sodium channels (Nav) and reduces peak current (observed on Nav1.6/SCN8A (IC(50)=307 nM)), shifts the voltage of activation toward more negative potentials (observed on Nav1.6, Nav1.1 (weak), Nav1.2 (weak), and Nav1.7 (weak)), and induces resurgent currents at negative voltages following brief and strong depolarizations (observed on Nav1.6, Nav1.1 (weak), and Nav1.7 (weak)). A reduction of peak current of Nav1.5/SCN7A has been observed in another study (IC(50)=35-40 nM). This toxin is only active on mammals. It has been shown to bind phospholipids. In Centruroides suffusus (Durango bark scorpion), this protein is Beta-mammal toxin Css2.